Consider the following 70-residue polypeptide: DNA gyrase inhibitor YacG (70 aa).

Zn(2+)-binding residues include Cys-21, Cys-24, Cys-36, and Cys-40.

It belongs to the DNA gyrase inhibitor YacG family. In terms of assembly, interacts with GyrB. Zn(2+) serves as cofactor.

Inhibits all the catalytic activities of DNA gyrase by preventing its interaction with DNA. Acts by binding directly to the C-terminal domain of GyrB, which probably disrupts DNA binding by the gyrase. In Rhizobium meliloti (strain 1021) (Ensifer meliloti), this protein is DNA gyrase inhibitor YacG.